Consider the following 300-residue polypeptide: MKQITIASRESKLALWQTNFVKNRIQSELNIPCEISTMKTQGDIILDQPLNKIGGKALFMKELEVAMLSNKADIAVHSLKDVPYQLPQGFCLAGFMPREDPRDAFVSNKYNSIDDLPKGAVVGTSSLRRKAQLLHYRDDLEIRDLRGNIQTRLSKLDNGDYDAIILASAGLIRLELVERITQFIPVEISLPAVGQGIVVIEALERDNDLLEKIQKLNCRESSRVATAERAFNQELKGGCHVAIGAYAELDNNQITLMAMVASSDGKKILKRKMIGDDPTKLGKLLAQEMIALGAYKILES.

An S-(dipyrrolylmethanemethyl)cysteine modification is found at C239.

This sequence belongs to the HMBS family. As to quaternary structure, monomer. The cofactor is dipyrromethane.

The enzyme catalyses 4 porphobilinogen + H2O = hydroxymethylbilane + 4 NH4(+). The protein operates within porphyrin-containing compound metabolism; protoporphyrin-IX biosynthesis; coproporphyrinogen-III from 5-aminolevulinate: step 2/4. In terms of biological role, tetrapolymerization of the monopyrrole PBG into the hydroxymethylbilane pre-uroporphyrinogen in several discrete steps. In Francisella tularensis subsp. holarctica (strain FTNF002-00 / FTA), this protein is Porphobilinogen deaminase.